A 531-amino-acid chain; its full sequence is SWI/SNF-related matrix-associated actin-dependent regulator of chromatin subfamily D member 2 (531 aa).

Residues 20–85 (AVAAALGAPP…MSPGSRMPMA (66 aa)) are disordered. Residues 34 to 45 (PGMLPNPALRGP) show a composition bias toward low complexity. Asymmetric dimethylarginine occurs at positions 81 and 104. The tract at residues 202–226 (FSPSKADGDNSGTAGTPGGTPAADK) is disordered. Ser-203 is subject to Phosphoserine. The residue at position 217 (Thr-217) is a Phosphothreonine. Lys-226 participates in a covalent cross-link: Glycyl lysine isopeptide (Lys-Gly) (interchain with G-Cter in SUMO2). One can recognise an SWIB/MDM2 domain in the interval 306 to 383 (HQPPQYKLDP…PMKLAGLLQH (78 aa)).

The protein belongs to the SMARCD family. As to quaternary structure, component of the multiprotein chromatin-remodeling complexes SWI/SNF: SWI/SNF-A (BAF), SWI/SNF-B (PBAF) and related complexes. The canonical complex contains a catalytic subunit (either SMARCA4/BRG1/BAF190A or SMARCA2/BRM/BAF190B), and at least SMARCE1, ACTL6A/BAF53, SMARCC1/BAF155, SMARCC2/BAF170, and SMARCB1/SNF5/BAF47. Other subunits specific to each of the complexes may also be present permitting several possible combinations developmentally and tissue specific. Component of the BAF complex, which includes at least actin (ACTB), ARID1A/BAF250A, ARID1B/BAF250B, SMARCA2/BRM, SMARCA4/BRG1, ACTL6A/BAF53, ACTL6B/BAF53B, SMARCE1/BAF57, SMARCC1/BAF155, SMARCC2/BAF170, SMARCB1/SNF5/INI1, and one or more SMARCD1/BAF60A, SMARCD2/BAF60B, or SMARCD3/BAF60C. In muscle cells, the BAF complex also contains DPF3. Component of the SWI/SNF-B (PBAF) chromatin remodeling complex, at least composed of SMARCA4/BRG1, SMARCB1/BAF47/SNF5, ACTL6A/BAF53A or ACTL6B/BAF53B, SMARCE1/BAF57, SMARCD1/BAF60A, SMARCD2/BAF60B, perhaps SMARCD3/BAF60C, SMARCC1/BAF155, SMARCC2/BAF170, PBRM1/BAF180, ARID2/BAF200 and actin (ACTB). Interacts with UNKL. Interacts with CEBPE. In terms of processing, ubiquitinated through a signaling process involving RAC1 and the RING finger protein UNKL.

Its subcellular location is the nucleus. Its function is as follows. Involved in transcriptional activation and repression of select genes by chromatin remodeling (alteration of DNA-nucleosome topology). Component of SWI/SNF chromatin remodeling complexes that carry out key enzymatic activities, changing chromatin structure by altering DNA-histone contacts within a nucleosome in an ATP-dependent manner. Critical regulator of myeloid differentiation, controlling granulocytopoiesis and the expression of genes involved in neutrophil granule formation. The sequence is that of SWI/SNF-related matrix-associated actin-dependent regulator of chromatin subfamily D member 2 (Smarcd2) from Rattus norvegicus (Rat).